The sequence spans 526 residues: ATP synthase subunit alpha (526 aa).

171–178 (GDRQTGKT) contributes to the ATP binding site.

The protein belongs to the ATPase alpha/beta chains family. As to quaternary structure, F-type ATPases have 2 components, CF(1) - the catalytic core - and CF(0) - the membrane proton channel. CF(1) has five subunits: alpha(3), beta(3), gamma(1), delta(1), epsilon(1). CF(0) has three main subunits: a(1), b(2) and c(9-12). The alpha and beta chains form an alternating ring which encloses part of the gamma chain. CF(1) is attached to CF(0) by a central stalk formed by the gamma and epsilon chains, while a peripheral stalk is formed by the delta and b chains.

Its subcellular location is the cell membrane. It carries out the reaction ATP + H2O + 4 H(+)(in) = ADP + phosphate + 5 H(+)(out). Produces ATP from ADP in the presence of a proton gradient across the membrane. The alpha chain is a regulatory subunit. In Christiangramia forsetii (strain DSM 17595 / CGMCC 1.15422 / KT0803) (Gramella forsetii), this protein is ATP synthase subunit alpha.